Reading from the N-terminus, the 272-residue chain is Probable feruloyl esterase C (272 aa).

Residues 1-22 (MVPTIIYSAILALSAFTPSVFA) form the signal peptide.

It belongs to the faeC family.

The protein resides in the secreted. It carries out the reaction feruloyl-polysaccharide + H2O = ferulate + polysaccharide.. Functionally, involved in degradation of plant cell walls. Hydrolyzes the feruloyl-arabinose ester bond in arabinoxylans, and the feruloyl-galactose ester bond in pectin. Active against paranitrophenyl-acetate, methyl ferulate and wheat arabinoxylan. The sequence is that of Probable feruloyl esterase C (faeC) from Aspergillus fumigatus (strain ATCC MYA-4609 / CBS 101355 / FGSC A1100 / Af293) (Neosartorya fumigata).